Here is a 513-residue protein sequence, read N- to C-terminus: GMP synthase [glutamine-hydrolyzing] (513 aa).

The 191-residue stretch at 8-198 (KIIVLDYGSQ…ALNICGAKGN (191 aa)) folds into the Glutamine amidotransferase type-1 domain. C85 (nucleophile) is an active-site residue. Active-site residues include H172 and E174. Residues 199–388 (WSMENFIDMQ…LGMPDEIVWR (190 aa)) enclose the GMPS ATP-PPase domain. 226–232 (SGGVDSS) lines the ATP pocket.

In terms of assembly, homodimer.

It catalyses the reaction XMP + L-glutamine + ATP + H2O = GMP + L-glutamate + AMP + diphosphate + 2 H(+). Its pathway is purine metabolism; GMP biosynthesis; GMP from XMP (L-Gln route): step 1/1. Its function is as follows. Catalyzes the synthesis of GMP from XMP. This chain is GMP synthase [glutamine-hydrolyzing] (guaA), found in Lactococcus lactis subsp. lactis (strain IL1403) (Streptococcus lactis).